Consider the following 330-residue polypeptide: Fructose-1,6-bisphosphatase class 1 (330 aa).

4 residues coordinate Mg(2+): glutamate 84, aspartate 103, leucine 105, and aspartate 106. Substrate is bound by residues 106-109 (DGSS), asparagine 196, and lysine 262. Glutamate 268 contributes to the Mg(2+) binding site.

Belongs to the FBPase class 1 family. In terms of assembly, homotetramer. Mg(2+) is required as a cofactor.

It localises to the cytoplasm. It catalyses the reaction beta-D-fructose 1,6-bisphosphate + H2O = beta-D-fructose 6-phosphate + phosphate. It participates in carbohydrate biosynthesis; gluconeogenesis. The protein is Fructose-1,6-bisphosphatase class 1 of Shewanella sp. (strain W3-18-1).